A 97-amino-acid chain; its full sequence is Co-chaperonin GroES (97 aa).

Belongs to the GroES chaperonin family. As to quaternary structure, heptamer of 7 subunits arranged in a ring. Interacts with the chaperonin GroEL.

It localises to the cytoplasm. Together with the chaperonin GroEL, plays an essential role in assisting protein folding. The GroEL-GroES system forms a nano-cage that allows encapsulation of the non-native substrate proteins and provides a physical environment optimized to promote and accelerate protein folding. GroES binds to the apical surface of the GroEL ring, thereby capping the opening of the GroEL channel. The polypeptide is Co-chaperonin GroES (Pectobacterium carotovorum subsp. carotovorum (strain PC1)).